The sequence spans 170 residues: Probable deoxyuridine 5'-triphosphate nucleotidohydrolase (170 aa).

The protein belongs to the dCTP deaminase family. Archaeal dUTPase subfamily.

It catalyses the reaction dUTP + H2O = dUMP + diphosphate + H(+). The protein operates within pyrimidine metabolism; dUMP biosynthesis; dUMP from dCTP (dUTP route): step 2/2. Its function is as follows. This enzyme is involved in nucleotide metabolism: it produces dUMP, the immediate precursor of thymidine nucleotides and it decreases the intracellular concentration of dUTP so that uracil cannot be incorporated into DNA. The chain is Probable deoxyuridine 5'-triphosphate nucleotidohydrolase from Methanococcoides burtonii (strain DSM 6242 / NBRC 107633 / OCM 468 / ACE-M).